The sequence spans 381 residues: Homoserine O-succinyltransferase (381 aa).

The AB hydrolase-1 domain maps to 45 to 360; that stretch reads NAVLVCHALN…PHGHDAFLLD (316 aa). The active-site Nucleophile is serine 151. Arginine 221 is a substrate binding site. Catalysis depends on residues aspartate 321 and histidine 354. Aspartate 355 serves as a coordination point for substrate.

This sequence belongs to the AB hydrolase superfamily. MetX family. In terms of assembly, homodimer.

It localises to the cytoplasm. The enzyme catalyses L-homoserine + succinyl-CoA = O-succinyl-L-homoserine + CoA. It participates in amino-acid biosynthesis; L-methionine biosynthesis via de novo pathway; O-succinyl-L-homoserine from L-homoserine: step 1/1. In terms of biological role, transfers a succinyl group from succinyl-CoA to L-homoserine, forming succinyl-L-homoserine. This chain is Homoserine O-succinyltransferase, found in Burkholderia multivorans (strain ATCC 17616 / 249).